The following is a 309-amino-acid chain: Voltage-dependent anion channel-forming protein mll4386 (309 aa).

The next 3 helical transmembrane spans lie at Ile-32–Trp-52, Gly-58–Phe-78, and Ile-227–Phe-247.

The protein belongs to the anion channel-forming bestrophin (TC 1.A.46) family.

Its subcellular location is the cell membrane. In Mesorhizobium japonicum (strain LMG 29417 / CECT 9101 / MAFF 303099) (Mesorhizobium loti (strain MAFF 303099)), this protein is Voltage-dependent anion channel-forming protein mll4386.